The primary structure comprises 685 residues: Exocyst complex component 8 (685 aa).

A PH domain is found at 151-251 (YLVYNGDLTE…WLEILEQTKK (101 aa)). The span at 254–263 (ALNEKQKQEE) shows a compositional bias: basic and acidic residues. The segment at 254–273 (ALNEKQKQEETTPQLPVVPE) is disordered.

Belongs to the EXO84 family. As to quaternary structure, the exocyst complex is composed of exoc1, exoc2, exoc3, exoc4, exoc5, exoc6, exoc7 and exoc8.

The protein localises to the cytoplasm. The protein resides in the perinuclear region. Its subcellular location is the cell projection. It localises to the growth cone. In terms of biological role, component of the exocyst complex involved in the docking of exocytic vesicles with fusion sites on the plasma membrane. This is Exocyst complex component 8 (exoc8) from Xenopus laevis (African clawed frog).